Here is a 348-residue protein sequence, read N- to C-terminus: MISDLISKLQEKTDLTYDEMNQVMTDVLSGKTTDSENADFLSNLTDKGETDDELLGMLDKMQEFSLKIEPKNTGTIIDMCGTGGDKLQTFNISTTASFVVAAAGGVVAKHGNRSSSGISGSADIFEYFGYDLNLEPPKIAEILEKHNICFMFAQKFHPAMKHVSVARKQLGKRTAFNLLGPLSNPAKVKNQLVGVFSIEYLDRLPLILKRKGAQNIMTVRSDDGMDEFSTSSTNRVCVLRDDKVLMNAIDPEVVGLHKSSLTDIQIQTKEDAIESFVGVLNNTANQAMIETTALNAAGGLIVANISNNFEEAVELALNTIKDGKAFSLLEKFVQDTGDISKLKEIADG.

5-phospho-alpha-D-ribose 1-diphosphate-binding positions include G81, 84–85 (GD), T89, 91–94 (NIST), 109–117 (KHGNRSSSG), and S121. G81 contacts anthranilate. Position 93 (S93) interacts with Mg(2+). N112 provides a ligand contact to anthranilate. Residue R167 coordinates anthranilate. The Mg(2+) site is built by D226 and E227.

This sequence belongs to the anthranilate phosphoribosyltransferase family. Homodimer. The cofactor is Mg(2+).

The enzyme catalyses N-(5-phospho-beta-D-ribosyl)anthranilate + diphosphate = 5-phospho-alpha-D-ribose 1-diphosphate + anthranilate. The protein operates within amino-acid biosynthesis; L-tryptophan biosynthesis; L-tryptophan from chorismate: step 2/5. Its function is as follows. Catalyzes the transfer of the phosphoribosyl group of 5-phosphorylribose-1-pyrophosphate (PRPP) to anthranilate to yield N-(5'-phosphoribosyl)-anthranilate (PRA). This Nitrosopumilus maritimus (strain SCM1) protein is Anthranilate phosphoribosyltransferase.